The chain runs to 504 residues: Maturase K (504 aa).

This sequence belongs to the intron maturase 2 family. MatK subfamily.

The protein localises to the plastid. It is found in the chloroplast. In terms of biological role, usually encoded in the trnK tRNA gene intron. Probably assists in splicing its own and other chloroplast group II introns. The polypeptide is Maturase K (Quercus robur (English oak)).